The sequence spans 98 residues: MFEQNLTSEALTVTTVTSQDQITQKPLRDSVKASLKNYLAQLNGQEVDDLYELVLAEVEQPLLDTIMQYTRGNQTRAATMMGINRGTLRKKLKKYGMN.

The segment at residues 74–93 (QTRAATMMGINRGTLRKKLK) is a DNA-binding region (H-T-H motif).

It belongs to the transcriptional regulatory Fis family. As to quaternary structure, homodimer.

Functionally, activates ribosomal RNA transcription. Plays a direct role in upstream activation of rRNA promoters. The polypeptide is DNA-binding protein Fis (Photobacterium profundum (strain SS9)).